Reading from the N-terminus, the 146-residue chain is Probable calcium-binding protein CML32 (146 aa).

4 consecutive EF-hand domains span residues 1–33 (MSVA…FSPS), 34–69 (ITSE…GGEG), 73–108 (DEDI…LGEK), and 109–144 (QTIA…NNKK). Ca(2+) contacts are provided by Asp11, Asn13, Asp15, Lys17, Glu22, Asp47, Asp49, Asp51, Gln53, Glu58, Asp86, Asp88, Asp90, Lys92, Glu97, Asp122, Asp124, Asp126, and Glu133.

Potential calcium sensor. The chain is Probable calcium-binding protein CML32 (CML32) from Arabidopsis thaliana (Mouse-ear cress).